The sequence spans 258 residues: 6-carboxyhexanoate--CoA ligase (258 aa).

The protein belongs to the BioW family. Homodimer. The cofactor is Mg(2+).

The enzyme catalyses heptanedioate + ATP + CoA = 6-carboxyhexanoyl-CoA + AMP + diphosphate. It participates in metabolic intermediate metabolism; pimeloyl-CoA biosynthesis; pimeloyl-CoA from pimelate: step 1/1. Its function is as follows. Catalyzes the transformation of pimelate into pimeloyl-CoA with concomitant hydrolysis of ATP to AMP. This Bacillus subtilis (strain BSn5) protein is 6-carboxyhexanoate--CoA ligase.